A 130-amino-acid chain; its full sequence is MAKTDRSQPSVLARIAAFRTGLSAEASAADYLERQGYRILARRFKTRCGEIDLVAQRDALVAFVEVKARGNVDDAAYAVTPRQQSRIVAAAEAWLSRHPEHAMSELRFDAILIAPNTAPRHLPGAFDATP.

Belongs to the UPF0102 family.

The sequence is that of UPF0102 protein RPA0323 from Rhodopseudomonas palustris (strain ATCC BAA-98 / CGA009).